Reading from the N-terminus, the 410-residue chain is Gamma-glutamyl phosphate reductase (410 aa).

Belongs to the gamma-glutamyl phosphate reductase family.

It localises to the cytoplasm. It carries out the reaction L-glutamate 5-semialdehyde + phosphate + NADP(+) = L-glutamyl 5-phosphate + NADPH + H(+). The protein operates within amino-acid biosynthesis; L-proline biosynthesis; L-glutamate 5-semialdehyde from L-glutamate: step 2/2. Catalyzes the NADPH-dependent reduction of L-glutamate 5-phosphate into L-glutamate 5-semialdehyde and phosphate. The product spontaneously undergoes cyclization to form 1-pyrroline-5-carboxylate. In Sulfurovum sp. (strain NBC37-1), this protein is Gamma-glutamyl phosphate reductase.